Reading from the N-terminus, the 147-residue chain is DNA-directed RNA polymerase subunit 6 homolog (147 aa).

The protein belongs to the archaeal RpoK/eukaryotic RPB6 RNA polymerase subunit family. As to quaternary structure, part of the viral DNA-directed RNA polymerase that consists of 8 polII-like subunits (RPB1, RPB2, RPB3, RPB5, RPB6, RPB7, RPB9, RPB10), a capping enzyme and a termination factor.

It is found in the host cytoplasm. The protein localises to the virion. Functionally, component of the DNA-directed RNA polymerase (RNAP) that catalyzes the transcription in the cytoplasm of viral DNA into RNA using the four ribonucleoside triphosphates as substrates. The chain is DNA-directed RNA polymerase subunit 6 homolog from Ornithodoros (relapsing fever ticks).